A 163-amino-acid chain; its full sequence is ATP synthase subunit b (163 aa).

A helical transmembrane segment spans residues Ser-13–Ile-33.

Belongs to the ATPase B chain family. As to quaternary structure, F-type ATPases have 2 components, F(1) - the catalytic core - and F(0) - the membrane proton channel. F(1) has five subunits: alpha(3), beta(3), gamma(1), delta(1), epsilon(1). F(0) has three main subunits: a(1), b(2) and c(10-14). The alpha and beta chains form an alternating ring which encloses part of the gamma chain. F(1) is attached to F(0) by a central stalk formed by the gamma and epsilon chains, while a peripheral stalk is formed by the delta and b chains.

Its subcellular location is the cell membrane. Its function is as follows. F(1)F(0) ATP synthase produces ATP from ADP in the presence of a proton or sodium gradient. F-type ATPases consist of two structural domains, F(1) containing the extramembraneous catalytic core and F(0) containing the membrane proton channel, linked together by a central stalk and a peripheral stalk. During catalysis, ATP synthesis in the catalytic domain of F(1) is coupled via a rotary mechanism of the central stalk subunits to proton translocation. Functionally, component of the F(0) channel, it forms part of the peripheral stalk, linking F(1) to F(0). In Buchnera aphidicola subsp. Schizaphis graminum (strain Sg), this protein is ATP synthase subunit b.